Here is a 352-residue protein sequence, read N- to C-terminus: tRNA pseudouridine synthase D (352 aa).

The active-site Nucleophile is D81. In terms of domain architecture, TRUD spans 157-303; that stretch reads GIPNYFGAQR…MSHERRILRL (147 aa).

It belongs to the pseudouridine synthase TruD family.

It catalyses the reaction uridine(13) in tRNA = pseudouridine(13) in tRNA. Responsible for synthesis of pseudouridine from uracil-13 in transfer RNAs. The chain is tRNA pseudouridine synthase D from Pseudomonas fluorescens (strain Pf0-1).